A 369-amino-acid polypeptide reads, in one-letter code: Putative protein FAM10A5 (369 aa).

Residues 38–98 (MGGKVPPATQ…IEPDTDAPQE (61 aa)) are disordered. Basic and acidic residues predominate over residues 49-73 (AKSEENTKEEKPDSKKVEEDLKADE). Over residues 89 to 98 (IEPDTDAPQE) the composition is skewed to acidic residues. 3 TPR repeats span residues 114–147 (ANDKKVAAIEVLNDGELQKAIDLFTDAIKLNPRL), 149–181 (ILYAKRASVFVKLQKPNAAIQDCDRAIEINPDS), and 183–215 (QPYKWRGKAHRLLGHWEEAAHDLAFACKLDYDE). The span at 256 to 272 (KAQEEQERAQREEEARR) shows a compositional bias: basic and acidic residues. The disordered stretch occupies residues 256 to 300 (KAQEEQERAQREEEARRQSGAHYGPFPGGFPGGMPGNFPGGMPGM). Residues 281-300 (FPGGFPGGMPGNFPGGMPGM) are compositionally biased toward gly residues. The region spanning 319-358 (DPEALAAMQDPEVMVAFQDVAQNPANMSKYQSNPKVMNLI) is the STI1 domain. Position 346 is a phosphoserine (Ser346). An N6-acetyllysine mark is found at Lys353 and Lys360.

The protein belongs to the FAM10 family.

Its subcellular location is the cytoplasm. This Homo sapiens (Human) protein is Putative protein FAM10A5 (ST13P5).